The following is a 48-amino-acid chain: uncharacterized protein (48 aa).

This is an uncharacterized protein from Dictyostelium discoideum (Social amoeba).